We begin with the raw amino-acid sequence, 145 residues long: D-aminoacyl-tRNA deacylase (145 aa).

Positions 137 to 138 match the Gly-cisPro motif, important for rejection of L-amino acids motif; it reads GP.

It belongs to the DTD family. Homodimer.

The protein localises to the cytoplasm. It catalyses the reaction glycyl-tRNA(Ala) + H2O = tRNA(Ala) + glycine + H(+). It carries out the reaction a D-aminoacyl-tRNA + H2O = a tRNA + a D-alpha-amino acid + H(+). Its function is as follows. An aminoacyl-tRNA editing enzyme that deacylates mischarged D-aminoacyl-tRNAs. Also deacylates mischarged glycyl-tRNA(Ala), protecting cells against glycine mischarging by AlaRS. Acts via tRNA-based rather than protein-based catalysis; rejects L-amino acids rather than detecting D-amino acids in the active site. By recycling D-aminoacyl-tRNA to D-amino acids and free tRNA molecules, this enzyme counteracts the toxicity associated with the formation of D-aminoacyl-tRNA entities in vivo and helps enforce protein L-homochirality. This chain is D-aminoacyl-tRNA deacylase, found in Rhodococcus jostii (strain RHA1).